The primary structure comprises 55 residues: Small integral membrane protein 27 (55 aa).

Residues 11–31 form a helical membrane-spanning segment; it reads WIYSVLLLAIVLISWGCIIYA.

It localises to the membrane. The protein is Small integral membrane protein 27 of Homo sapiens (Human).